We begin with the raw amino-acid sequence, 488 residues long: Cobyric acid synthase (488 aa).

Residues 248–441 (VLRVVVPALP…VHGLFDTPAA (194 aa)) enclose the GATase cobBQ-type domain. Cysteine 328 functions as the Nucleophile in the catalytic mechanism. Residue histidine 433 is part of the active site.

It belongs to the CobB/CobQ family. CobQ subfamily.

It participates in cofactor biosynthesis; adenosylcobalamin biosynthesis. Its function is as follows. Catalyzes amidations at positions B, D, E, and G on adenosylcobyrinic A,C-diamide. NH(2) groups are provided by glutamine, and one molecule of ATP is hydrogenolyzed for each amidation. This Burkholderia vietnamiensis (strain G4 / LMG 22486) (Burkholderia cepacia (strain R1808)) protein is Cobyric acid synthase.